Consider the following 138-residue polypeptide: Regulator of ribonuclease activity B (138 aa).

The tract at residues 111 to 138 (WGTYFEDPNGEEGDDDDYVDEDDDGVRH) is disordered. The span at 118 to 138 (PNGEEGDDDDYVDEDDDGVRH) shows a compositional bias: acidic residues.

This sequence belongs to the RraB family. Interacts with the C-terminal region of Rne.

The protein resides in the cytoplasm. Its function is as follows. Globally modulates RNA abundance by binding to RNase E (Rne) and regulating its endonucleolytic activity. Can modulate Rne action in a substrate-dependent manner by altering the composition of the degradosome. This Salmonella typhi protein is Regulator of ribonuclease activity B.